We begin with the raw amino-acid sequence, 426 residues long: MLDLKRIRNNSNEIKEALNNRGEKFDVTVIDEVLKLDEERRNILAKVEVLKSKRNQVSSEVPKLKKEGKDVSNIVAEMKNLSEEIKGFDATLAKIDEKIQYIMLRIPNIPNPQVPDGETDEDNIEIRNWLEPTKFYFEPKAHWDIGTNLNILDFERAGKVTGSRFTFYKGLGARLERAVISYFLDTHTEKHGYTEILPPYMVNRTSMIGTGQLPKFEEDAFKISEDDYFLIPTAEVPVTNLYRDEILKGDELPLKHVAYSACFRSEAGSAGRDTRGLVRQHQFNKVELVKFTKPEQSYEELEKLTNDAETVLKELGIPYRVVRICKGDLGFTAALKYDLEVWMPSYNRYVEISSCSNFEDFQARRANIRYKEDAKAKPQYVHTLNGSGVAIGRTVAAILENYQSEDGSVTIPEVLRPYMGGREVIK.

Residue 233-235 participates in L-serine binding; it reads TAE. 264-266 serves as a coordination point for ATP; it reads RSE. L-serine is bound at residue Glu-287. ATP is bound at residue 351 to 354; sequence EISS. Ser-387 contacts L-serine.

It belongs to the class-II aminoacyl-tRNA synthetase family. Type-1 seryl-tRNA synthetase subfamily. As to quaternary structure, homodimer. The tRNA molecule binds across the dimer.

The protein resides in the cytoplasm. It carries out the reaction tRNA(Ser) + L-serine + ATP = L-seryl-tRNA(Ser) + AMP + diphosphate + H(+). It catalyses the reaction tRNA(Sec) + L-serine + ATP = L-seryl-tRNA(Sec) + AMP + diphosphate + H(+). It functions in the pathway aminoacyl-tRNA biosynthesis; selenocysteinyl-tRNA(Sec) biosynthesis; L-seryl-tRNA(Sec) from L-serine and tRNA(Sec): step 1/1. Catalyzes the attachment of serine to tRNA(Ser). Is also able to aminoacylate tRNA(Sec) with serine, to form the misacylated tRNA L-seryl-tRNA(Sec), which will be further converted into selenocysteinyl-tRNA(Sec). The sequence is that of Serine--tRNA ligase from Clostridium botulinum (strain Langeland / NCTC 10281 / Type F).